The chain runs to 286 residues: Aldo-keto reductase MAV_4483 (286 aa).

The active-site Proton donor is Tyr61. NADPH is bound by residues Leu201, Val203, Val239, Arg241, Ser242, Arg247, and Asn251.

The protein belongs to the aldo/keto reductase family.

The sequence is that of Aldo-keto reductase MAV_4483 from Mycobacterium avium (strain 104).